The primary structure comprises 183 residues: Peptidoglycan recognition protein 1 (183 aa).

Residues 1–17 form the signal peptide; it reads MLFAWAPFPALLGLADS. 3 disulfides stabilise this stretch: cysteine 18-cysteine 142, cysteine 34-cysteine 79, and cysteine 55-cysteine 61. Residues 40–168 form the N-acetylmuramoyl-L-alanine amidase domain; the sequence is KPVRYVVISH…RDVQSTLSPG (129 aa).

This sequence belongs to the N-acetylmuramoyl-L-alanine amidase 2 family. Expressed in all regions of the brain.

The protein localises to the secreted. It localises to the cytoplasmic granule. Its function is as follows. Innate immunity protein that plays several important functions in antimicrobial and antitumor defense systems. Acts as a pattern receptor that binds to murein peptidoglycans (PGN) of Gram-positive bacteria and thus provides bactericidal activity. Forms an equimolar complex with heat shock protein HSPA1A and induces programmed cell death through apoptosis and necroptosis in tumor cell lines by activating the TNFR1 receptor on the target cell membrane. In addition, acts in complex with the Ca(2+)-binding protein S100A4 as a chemoattractant able to induce lymphocyte movement. Mechanistically, this complex acts as a ligand of the chemotactic receptors CCR5 and CXCR3 which are present on the cells of the immune system. Promotes also the activation of lymphocytes that become able to kill virus-infected cells as well as tumor cells by modulating the spectrum of their target-cell specificity. Induction of cytotoxicity on monocyte surface requires interaction with TREM1 receptor. The chain is Peptidoglycan recognition protein 1 (Pglyrp1) from Rattus norvegicus (Rat).